Here is a 338-residue protein sequence, read N- to C-terminus: NADPH dehydrogenase (338 aa).

22–25 contacts FMN; that stretch reads SPMC. Residue Tyr-27 coordinates substrate. FMN contacts are provided by Ala-59 and Gln-101. 163 to 166 contributes to the substrate binding site; it reads HAAH. FMN is bound by residues Arg-214 and 306 to 307; that span reads GR.

The protein belongs to the NADH:flavin oxidoreductase/NADH oxidase family. NamA subfamily. As to quaternary structure, homotetramer. FMN serves as cofactor.

It carries out the reaction A + NADPH + H(+) = AH2 + NADP(+). Catalyzes the reduction of the double bond of an array of alpha,beta-unsaturated aldehydes and ketones. It also reduces the nitro group of nitroester and nitroaromatic compounds. It could have a role in detoxification processes. This Listeria innocua serovar 6a (strain ATCC BAA-680 / CLIP 11262) protein is NADPH dehydrogenase.